The following is a 265-amino-acid chain: MYTLMKADVLAQLAGLQQEISQLHDNAQQNQSHFVLLERRFSRLQSFNDEPQLQDYRLQLEHDDAVVKQIAQLRQVANAALCDYEKHQVCALCSPSSKTDDYLTSFNQSLQQEIKLAGMQMGEKVLLVGSGALPTTALVLVAKLGATVFCYDHDPAAQQLARQLVQSLGLEKQVQFIDNLKELTDRPVDHIIVASLVADKQALLAQLVPYVTRSSKLVMRYGNGLKSIFNCPYCHEVNCSHWRTASKPVTTGLYDLIILEPNHHA.

This sequence belongs to the methyltransferase superfamily. CntL family.

The enzyme catalyses L-histidine + S-adenosyl-L-methionine = (2S)-2-amino-4-{[(1S)-1-carboxy-2-(1H-imidazol-4-yl)ethyl]amino}butanoate + S-methyl-5'-thioadenosine + H(+). Catalyzes the nucleophilic attack of one alpha-aminobutanoate moiety from SAM onto L-histidine to produce the intermediate (2S)-2-amino-4-{[(1S)-1-carboxy-2-(1H-imidazol-4-yl)ethyl]amino}butanoate. Functions in the biosynthesis of the metallophore yersinopine, which is involved in metal acquisition and thus enables bacterial growth inside the host, where metal access is limited. Therefore, this enzyme probably contributes to Yersinia virulence. The polypeptide is L-histidine 2-aminobutanoyltransferase (Yersinia pestis).